Here is a 120-residue protein sequence, read N- to C-terminus: Purkinje cell protein 2 (120 aa).

GoLoco domains are found at residues 7–29 (QEGF…RCSL) and 47–69 (MDNL…RVTV). Residues 16–120 (HVQGDRMEEQ…SSPQPQTQAP (105 aa)) are disordered. A compositionally biased stretch (polar residues) spans 108 to 120 (RRNSSPQPQTQAP). S111 carries the phosphoserine modification.

Cerebellum (Purkinje cells) and retinal bipolar neurons.

May function as a cell-type specific modulator for G protein-mediated cell signaling. In Mus musculus (Mouse), this protein is Purkinje cell protein 2 (Pcp2).